The chain runs to 409 residues: Gamma-glutamyl phosphate reductase (409 aa).

It belongs to the gamma-glutamyl phosphate reductase family.

Its subcellular location is the cytoplasm. It carries out the reaction L-glutamate 5-semialdehyde + phosphate + NADP(+) = L-glutamyl 5-phosphate + NADPH + H(+). It participates in amino-acid biosynthesis; L-proline biosynthesis; L-glutamate 5-semialdehyde from L-glutamate: step 2/2. Its function is as follows. Catalyzes the NADPH-dependent reduction of L-glutamate 5-phosphate into L-glutamate 5-semialdehyde and phosphate. The product spontaneously undergoes cyclization to form 1-pyrroline-5-carboxylate. This chain is Gamma-glutamyl phosphate reductase, found in Bartonella tribocorum (strain CIP 105476 / IBS 506).